The chain runs to 313 residues: N-acetyl-gamma-glutamyl-phosphate reductase (313 aa).

Residue Cys-117 is part of the active site.

Belongs to the NAGSA dehydrogenase family. Type 2 subfamily.

The protein resides in the cytoplasm. It catalyses the reaction N-acetyl-L-glutamate 5-semialdehyde + phosphate + NADP(+) = N-acetyl-L-glutamyl 5-phosphate + NADPH + H(+). It participates in amino-acid biosynthesis; L-arginine biosynthesis; N(2)-acetyl-L-ornithine from L-glutamate: step 3/4. Its function is as follows. Catalyzes the NADPH-dependent reduction of N-acetyl-5-glutamyl phosphate to yield N-acetyl-L-glutamate 5-semialdehyde. This chain is N-acetyl-gamma-glutamyl-phosphate reductase, found in Burkholderia orbicola (strain MC0-3).